Here is a 499-residue protein sequence, read N- to C-terminus: E3 ubiquitin-protein ligase TRIM69 (499 aa).

The segment at 1–152 (MEVSSRPPSN…SMGQSKDFLQ (152 aa)) is necessary for nuclear localization. The RING-type zinc-finger motif lies at 41 to 82 (CPLCNDWFRDPLMLTCGHNFCQACIQNYWKMQAKETFCPECK). The stretch at 160–265 (FTEELAIYQS…NIQARMEQQN (106 aa)) forms a coiled coil. The B30.2/SPRY domain maps to 305–499 (PIQYTIWREM…KEPLHIVHPQ (195 aa)). Ser341 carries the phosphoserine modification.

The protein belongs to the TRIM/RBCC family. In terms of assembly, homo-multimer; required for antiviral activity. Interacts with PML. In terms of processing, phosphorylated. Phosphorylation is necessary for nuclear localization.

Its subcellular location is the cytoplasm. The protein localises to the nucleus. It is found in the nucleus speckle. The protein resides in the cytoskeleton. It localises to the microtubule organizing center. Its subcellular location is the centrosome. It carries out the reaction S-ubiquitinyl-[E2 ubiquitin-conjugating enzyme]-L-cysteine + [acceptor protein]-L-lysine = [E2 ubiquitin-conjugating enzyme]-L-cysteine + N(6)-ubiquitinyl-[acceptor protein]-L-lysine.. It participates in protein modification; protein ubiquitination. Its function is as follows. E3 ubiquitin ligase that plays an important role in antiviral immunity by restricting different viral infections including dengue virus or vesicular stomatitis indiana virus. Ubiquitinates viral proteins such as dengue virus NS3 thereby limiting infection. In addition, acts as a key mediator of type I interferon induced microtubule stabilization by directly associating to microtubules independently of its E3 ligase activity. Also plays a role in cataract formation together with TP53. Mechanistically, inhibits UVB-induced cell apoptosis and reactive oxygen species (ROS) production by inducing TP53 ubiquitination. Regulates centrosome dynamics and mitotic progression by ubiquitinating STK3/MST2; leading to its redistribution to the perinuclear cytoskeleton and subsequent phosphorylation by PLK1. The sequence is that of E3 ubiquitin-protein ligase TRIM69 (Trim69) from Rattus norvegicus (Rat).